The chain runs to 290 residues: Type II secretion system protein C (290 aa).

At 1-28 (MTLPFRNDLLSSLLARCKTVPLSRFSQP) the chain is on the cytoplasmic side. A helical transmembrane segment spans residues 29 to 46 (LFWLLLLLLAHQCAGLTW). Topologically, residues 47-290 (RLLDLGSQQA…LYDVYVGLSE (244 aa)) are periplasmic.

This sequence belongs to the GSP C family.

It localises to the cell inner membrane. Its function is as follows. Involved in a type II secretion system (T2SS, formerly general secretion pathway, GSP) for the export of proteins. In Aeromonas hydrophila, this protein is Type II secretion system protein C (exeC).